We begin with the raw amino-acid sequence, 260 residues long: Small ribosomal subunit protein uS2 (260 aa).

The disordered stretch occupies residues 240–260 (VLKPKLPYQPNRRPYQETVKK).

It belongs to the universal ribosomal protein uS2 family.

In Phytoplasma australiense, this protein is Small ribosomal subunit protein uS2.